Reading from the N-terminus, the 219-residue chain is Rho-related protein racN (219 aa).

12 to 19 (GDVTIGKT) serves as a coordination point for GTP. Residues 33-41 (YIPTIFDNH) carry the Effector region motif. Residues 58–62 (DTGGG) and 114–117 (TKTD) contribute to the GTP site. Position 216 is a cysteine methyl ester (C216). A lipid anchor (S-geranylgeranyl cysteine) is attached at C216. Positions 217–219 (IIC) are cleaved as a propeptide — removed in mature form.

The protein belongs to the small GTPase superfamily. Rho family.

Its subcellular location is the cell membrane. This chain is Rho-related protein racN (racN), found in Dictyostelium discoideum (Social amoeba).